The chain runs to 166 residues: Large ribosomal subunit protein uL10 (166 aa).

The protein belongs to the universal ribosomal protein uL10 family. Part of the ribosomal stalk of the 50S ribosomal subunit. The N-terminus interacts with L11 and the large rRNA to form the base of the stalk. The C-terminus forms an elongated spine to which L12 dimers bind in a sequential fashion forming a multimeric L10(L12)X complex.

In terms of biological role, forms part of the ribosomal stalk, playing a central role in the interaction of the ribosome with GTP-bound translation factors. In Pseudomonas paraeruginosa (strain DSM 24068 / PA7) (Pseudomonas aeruginosa (strain PA7)), this protein is Large ribosomal subunit protein uL10.